A 107-amino-acid chain; its full sequence is Replication initiation control protein YabA (107 aa).

H81, C83, C97, and C100 together coordinate Zn(2+).

This sequence belongs to the YabA family. As to quaternary structure, homotetramer. Interacts with both DnaA and DnaN, acting as a bridge between these two proteins. Requires Zn(2+) as cofactor.

It localises to the cytoplasm. Its subcellular location is the nucleoid. Functionally, involved in control of chromosome replication initiation. Inhibits the cooperative binding of DnaA to the oriC region, thus negatively regulating initiation of chromosome replication. Inhibits the ability of DnaA-ATP to form a helix on DNA; does not disassemble preformed DnaA-DNA helices. Decreases the residence time of DnaA on the chromosome at its binding sites (oriC, replication forks and promoter-binding sites). Tethers DnaA to the replication machinery via the DNA polymerase beta sliding clamp subunit (dnaN). Associates with oriC and other DnaA targets on the chromosome in a DnaA-dependent manner. In Streptococcus pyogenes serotype M18 (strain MGAS8232), this protein is Replication initiation control protein YabA.